Reading from the N-terminus, the 505-residue chain is Deoxyguanosinetriphosphate triphosphohydrolase (505 aa).

The region spanning 66 to 273 is the HD domain; the sequence is RLTHSMEVQQ…MEAADDISYC (208 aa).

It belongs to the dGTPase family. Type 1 subfamily. In terms of assembly, homotetramer. It depends on Mg(2+) as a cofactor.

The catalysed reaction is dGTP + H2O = 2'-deoxyguanosine + triphosphate + H(+). DGTPase preferentially hydrolyzes dGTP over the other canonical NTPs. This is Deoxyguanosinetriphosphate triphosphohydrolase from Salmonella choleraesuis (strain SC-B67).